We begin with the raw amino-acid sequence, 208 residues long: Large ribosomal subunit protein uL4 (208 aa).

A disordered region spans residues 44-89 (RRQGTHKAKNRSEVRGGGRKPYRQKGTGHARQGSTRSPLMTGGGTI). Positions 60–71 (GGRKPYRQKGTG) are enriched in basic residues.

The protein belongs to the universal ribosomal protein uL4 family. In terms of assembly, part of the 50S ribosomal subunit.

Functionally, one of the primary rRNA binding proteins, this protein initially binds near the 5'-end of the 23S rRNA. It is important during the early stages of 50S assembly. It makes multiple contacts with different domains of the 23S rRNA in the assembled 50S subunit and ribosome. In terms of biological role, forms part of the polypeptide exit tunnel. This is Large ribosomal subunit protein uL4 from Chlorobium phaeobacteroides (strain BS1).